Here is a 186-residue protein sequence, read N- to C-terminus: Ribosome-recycling factor (186 aa).

Belongs to the RRF family.

It is found in the cytoplasm. Its function is as follows. Responsible for the release of ribosomes from messenger RNA at the termination of protein biosynthesis. May increase the efficiency of translation by recycling ribosomes from one round of translation to another. This Prosthecochloris aestuarii (strain DSM 271 / SK 413) protein is Ribosome-recycling factor.